The primary structure comprises 364 residues: Protein-glutamate methylesterase/protein-glutamine glutaminase 3 (364 aa).

The Response regulatory domain occupies 7-124; it reads RVLIVDDSAS…THALLEASAR (118 aa). Asp-58 carries the 4-aspartylphosphate modification. Positions 167–358 constitute a CheB-type methylesterase domain; that stretch reads PTTERLVCIG…REIMLWQDAK (192 aa). Residues Ser-178, His-204, and Asp-300 contribute to the active site.

It belongs to the CheB family. In terms of processing, phosphorylated by CheA. Phosphorylation of the N-terminal regulatory domain activates the methylesterase activity.

The protein resides in the cytoplasm. It carries out the reaction [protein]-L-glutamate 5-O-methyl ester + H2O = L-glutamyl-[protein] + methanol + H(+). It catalyses the reaction L-glutaminyl-[protein] + H2O = L-glutamyl-[protein] + NH4(+). Its function is as follows. Involved in chemotaxis. Part of a chemotaxis signal transduction system that modulates chemotaxis in response to various stimuli. Catalyzes the demethylation of specific methylglutamate residues introduced into the chemoreceptors (methyl-accepting chemotaxis proteins or MCP) by CheR. Also mediates the irreversible deamidation of specific glutamine residues to glutamic acid. The chain is Protein-glutamate methylesterase/protein-glutamine glutaminase 3 from Rhodopseudomonas palustris (strain BisB18).